Reading from the N-terminus, the 498-residue chain is Cytochrome P450 monooxygenase apdB (498 aa).

The helical transmembrane segment at 20–40 (ASPQVFKLFVLILFVLLVLKI) threads the bilayer. Cys-457 is a binding site for heme.

It belongs to the cytochrome P450 family. The cofactor is heme.

The protein localises to the membrane. The protein operates within secondary metabolite biosynthesis. In terms of biological role, cytochrome P450 monooxygenase; part of the gene cluster that mediates the biosynthesis of aspyridones. The polyketide-amino acid backbone preaspyridone A is first assembled by the PKS-NRPS hybrid apdA. The assembly of preaspyridone A is initiated by loading of malonyl-CoA onto apdA, followed by decarboxylation to yield the acetyl starter unit. The growing polyketide chain then elongates into a tetraketide. The adpA PKS module catalyzes three Claisen condensations, as well as beta-keto processing and methylation. Alpha-methylation step during polyketide synthesis is a prerequisite and a key checkpoint for chain transfer between PKS and NRPS modules. The downstream NRPS module contains the condensation (C), adenylation (A), and thiolation (T) domains and catalyzes the incorporation of tyrosine via the formation of the L-tyrosinyl-thioester and the amide linkage between L-tyrosinyl-thioester and the tetraketide. The bimodular assembly line is terminated with a reductase (R) domain that facilitates formation and release of the tetramic acid product. Because apdA lacks a designated enoylreductase (ER) domain, the required activity is provided the enoyl reductase apdC. ApdC appears to operate with different stereoselectivity in different PKS cycle. Combined with apdC, apdA is proposed to synthesize preaspyridone A via about 20 enzymatic steps. A number of oxidative steps performed successively by the cytochrome P450 monooxygenases apdE and apdB are required for the conversion of preaspyridone A to aspyridone A. The cytochrome P450 monooxygenase apdE is responsible for the oxidative dephenylation of preaspyridone A. Finally, the predicted FAD-dependent monooxygenase apdD and the acyl-CoA dehydrogenase apdG may be involved in the transformation of aspyridone A into aspyridone B. The protein is Cytochrome P450 monooxygenase apdB of Emericella nidulans (strain FGSC A4 / ATCC 38163 / CBS 112.46 / NRRL 194 / M139) (Aspergillus nidulans).